Consider the following 433-residue polypeptide: Enolase (433 aa).

Q167 is a binding site for (2R)-2-phosphoglycerate. Catalysis depends on E209, which acts as the Proton donor. Residues D246, E291, and D318 each coordinate Mg(2+). K343, R372, S373, and K394 together coordinate (2R)-2-phosphoglycerate. K343 functions as the Proton acceptor in the catalytic mechanism.

It belongs to the enolase family. In terms of assembly, component of the RNA degradosome, a multiprotein complex involved in RNA processing and mRNA degradation. Mg(2+) serves as cofactor.

The protein localises to the cytoplasm. The protein resides in the secreted. It localises to the cell surface. It catalyses the reaction (2R)-2-phosphoglycerate = phosphoenolpyruvate + H2O. It functions in the pathway carbohydrate degradation; glycolysis; pyruvate from D-glyceraldehyde 3-phosphate: step 4/5. In terms of biological role, catalyzes the reversible conversion of 2-phosphoglycerate (2-PG) into phosphoenolpyruvate (PEP). It is essential for the degradation of carbohydrates via glycolysis. The sequence is that of Enolase from Tolumonas auensis (strain DSM 9187 / NBRC 110442 / TA 4).